The following is a 313-amino-acid chain: tRNA dimethylallyltransferase 2 (313 aa).

An ATP-binding site is contributed by 16–23; that stretch reads GPTASGKT. 18 to 23 serves as a coordination point for substrate; that stretch reads TASGKT. Interaction with substrate tRNA stretches follow at residues 41–44 and 161–165; these read DSRQ and QRTIR.

The protein belongs to the IPP transferase family. In terms of assembly, monomer. Mg(2+) is required as a cofactor.

The catalysed reaction is adenosine(37) in tRNA + dimethylallyl diphosphate = N(6)-dimethylallyladenosine(37) in tRNA + diphosphate. Its function is as follows. Catalyzes the transfer of a dimethylallyl group onto the adenine at position 37 in tRNAs that read codons beginning with uridine, leading to the formation of N6-(dimethylallyl)adenosine (i(6)A). This chain is tRNA dimethylallyltransferase 2, found in Pelobacter propionicus (strain DSM 2379 / NBRC 103807 / OttBd1).